The following is a 144-amino-acid chain: Large ribosomal subunit protein uL16 (144 aa).

A compositionally biased stretch (basic residues) spans Met1–Arg14. Positions Met1–Asn22 are disordered.

The protein belongs to the universal ribosomal protein uL16 family. Part of the 50S ribosomal subunit.

Functionally, binds 23S rRNA and is also seen to make contacts with the A and possibly P site tRNAs. This Syntrophomonas wolfei subsp. wolfei (strain DSM 2245B / Goettingen) protein is Large ribosomal subunit protein uL16.